Consider the following 882-residue polypeptide: Alanine--tRNA ligase (882 aa).

Zn(2+)-binding residues include histidine 564, histidine 568, cysteine 666, and histidine 670.

Belongs to the class-II aminoacyl-tRNA synthetase family. Zn(2+) is required as a cofactor.

It localises to the cytoplasm. It carries out the reaction tRNA(Ala) + L-alanine + ATP = L-alanyl-tRNA(Ala) + AMP + diphosphate. Functionally, catalyzes the attachment of alanine to tRNA(Ala) in a two-step reaction: alanine is first activated by ATP to form Ala-AMP and then transferred to the acceptor end of tRNA(Ala). Also edits incorrectly charged Ser-tRNA(Ala) and Gly-tRNA(Ala) via its editing domain. This is Alanine--tRNA ligase from Rubrobacter xylanophilus (strain DSM 9941 / JCM 11954 / NBRC 16129 / PRD-1).